Consider the following 298-residue polypeptide: Nucleotide-binding protein Dred_3054 (298 aa).

Residue 20–27 (GMSGAGKT) coordinates ATP. GTP is bound at residue 71–74 (DIRG).

This sequence belongs to the RapZ-like family.

Displays ATPase and GTPase activities. The sequence is that of Nucleotide-binding protein Dred_3054 from Desulforamulus reducens (strain ATCC BAA-1160 / DSM 100696 / MI-1) (Desulfotomaculum reducens).